The following is a 258-amino-acid chain: Imidazole glycerol phosphate synthase subunit HisF (258 aa).

Catalysis depends on residues Asp11 and Asp130.

It belongs to the HisA/HisF family. As to quaternary structure, heterodimer of HisH and HisF.

The protein localises to the cytoplasm. The catalysed reaction is 5-[(5-phospho-1-deoxy-D-ribulos-1-ylimino)methylamino]-1-(5-phospho-beta-D-ribosyl)imidazole-4-carboxamide + L-glutamine = D-erythro-1-(imidazol-4-yl)glycerol 3-phosphate + 5-amino-1-(5-phospho-beta-D-ribosyl)imidazole-4-carboxamide + L-glutamate + H(+). The protein operates within amino-acid biosynthesis; L-histidine biosynthesis; L-histidine from 5-phospho-alpha-D-ribose 1-diphosphate: step 5/9. Functionally, IGPS catalyzes the conversion of PRFAR and glutamine to IGP, AICAR and glutamate. The HisF subunit catalyzes the cyclization activity that produces IGP and AICAR from PRFAR using the ammonia provided by the HisH subunit. The protein is Imidazole glycerol phosphate synthase subunit HisF of Escherichia fergusonii (strain ATCC 35469 / DSM 13698 / CCUG 18766 / IAM 14443 / JCM 21226 / LMG 7866 / NBRC 102419 / NCTC 12128 / CDC 0568-73).